The chain runs to 124 residues: Small ribosomal subunit protein uS13 (124 aa).

Positions 95–124 (GLPVRGQRTKTNARTRKGPKRTIAGKKKAR) are disordered.

It belongs to the universal ribosomal protein uS13 family. Part of the 30S ribosomal subunit. Forms a loose heterodimer with protein S19. Forms two bridges to the 50S subunit in the 70S ribosome.

Located at the top of the head of the 30S subunit, it contacts several helices of the 16S rRNA. In the 70S ribosome it contacts the 23S rRNA (bridge B1a) and protein L5 of the 50S subunit (bridge B1b), connecting the 2 subunits; these bridges are implicated in subunit movement. Contacts the tRNAs in the A and P-sites. In Mycobacterium marinum (strain ATCC BAA-535 / M), this protein is Small ribosomal subunit protein uS13.